The sequence spans 112 residues: uncharacterized protein (112 aa).

The helical transmembrane segment at 62–82 (THSFIFFILFLFIFIFLTFSH) threads the bilayer.

The protein resides in the membrane. This is an uncharacterized protein from Saccharomyces cerevisiae (strain ATCC 204508 / S288c) (Baker's yeast).